The following is a 114-amino-acid chain: Flagellar hook-basal body complex protein FliE (114 aa).

Belongs to the FliE family.

It localises to the bacterial flagellum basal body. The polypeptide is Flagellar hook-basal body complex protein FliE (Burkholderia vietnamiensis (strain G4 / LMG 22486) (Burkholderia cepacia (strain R1808))).